A 435-amino-acid chain; its full sequence is 5-methylthioadenosine/S-adenosylhomocysteine deaminase (435 aa).

Zn(2+)-binding residues include His-65 and His-67. Positions 94, 150, and 189 each coordinate substrate. Position 216 (His-216) interacts with Zn(2+). Residues Glu-219 and Asp-304 each coordinate substrate. Asp-304 contributes to the Zn(2+) binding site.

The protein belongs to the metallo-dependent hydrolases superfamily. MTA/SAH deaminase family. Zn(2+) is required as a cofactor.

It carries out the reaction S-adenosyl-L-homocysteine + H2O + H(+) = S-inosyl-L-homocysteine + NH4(+). It catalyses the reaction S-methyl-5'-thioadenosine + H2O + H(+) = S-methyl-5'-thioinosine + NH4(+). In terms of biological role, catalyzes the deamination of 5-methylthioadenosine and S-adenosyl-L-homocysteine into 5-methylthioinosine and S-inosyl-L-homocysteine, respectively. Is also able to deaminate adenosine. The polypeptide is 5-methylthioadenosine/S-adenosylhomocysteine deaminase (Bacillus cereus (strain 03BB102)).